Here is a 212-residue protein sequence, read N- to C-terminus: Uridine kinase (212 aa).

13-20 (GASASGKS) is a binding site for ATP.

It belongs to the uridine kinase family.

It localises to the cytoplasm. It carries out the reaction uridine + ATP = UMP + ADP + H(+). The catalysed reaction is cytidine + ATP = CMP + ADP + H(+). It participates in pyrimidine metabolism; CTP biosynthesis via salvage pathway; CTP from cytidine: step 1/3. Its pathway is pyrimidine metabolism; UMP biosynthesis via salvage pathway; UMP from uridine: step 1/1. The chain is Uridine kinase from Shewanella halifaxensis (strain HAW-EB4).